Here is a 177-residue protein sequence, read N- to C-terminus: Calcineurin subunit B (177 aa).

EF-hand domains are found at residues 25–60, 62–92, 94–129, and 135–170; these read KEIKKLYKRFKKLDKDGNGTISKDEFLMIPELAVNP, VKRVISIFDENGDGSVNFKEFIAALSVFNAQ, DKQRKLEFAFKVYDIDGDGYISNGELFTVLKMMVGN, and QLQQIVDKTILEADEDGDGKISFEEFAKTLSHQDLE. Residues aspartate 38, aspartate 40, asparagine 42, threonine 44, glutamate 49, aspartate 70, asparagine 72, aspartate 74, serine 76, glutamate 81, aspartate 107, aspartate 109, aspartate 111, tyrosine 113, glutamate 118, aspartate 148, aspartate 150, aspartate 152, lysine 154, and glutamate 159 each coordinate Ca(2+).

It belongs to the calcineurin regulatory subunit family. In terms of assembly, composed of a catalytic subunit (A) and a regulatory subunit (B).

In terms of biological role, regulatory subunit of calcineurin, a calcium-dependent, calmodulin stimulated protein phosphatase. Confers calcium sensitivity. This chain is Calcineurin subunit B (CNB1), found in Naegleria gruberi (Amoeba).